The following is a 460-amino-acid chain: Cysteine--tRNA ligase (460 aa).

A Zn(2+)-binding site is contributed by cysteine 29. A 'HIGH' region motif is present at residues 31-41 (MTIYDLCHIGH). The Zn(2+) site is built by cysteine 213, histidine 238, and glutamate 242. Positions 270-274 (KMSKS) match the 'KMSKS' region motif. Lysine 273 contributes to the ATP binding site.

The protein belongs to the class-I aminoacyl-tRNA synthetase family. As to quaternary structure, monomer. Zn(2+) serves as cofactor.

The protein localises to the cytoplasm. It carries out the reaction tRNA(Cys) + L-cysteine + ATP = L-cysteinyl-tRNA(Cys) + AMP + diphosphate. This is Cysteine--tRNA ligase from Verminephrobacter eiseniae (strain EF01-2).